A 513-amino-acid polypeptide reads, in one-letter code: ATP synthase subunit alpha (513 aa).

169-176 (GDRQTGKT) is an ATP binding site.

The protein belongs to the ATPase alpha/beta chains family. In terms of assembly, F-type ATPases have 2 components, CF(1) - the catalytic core - and CF(0) - the membrane proton channel. CF(1) has five subunits: alpha(3), beta(3), gamma(1), delta(1), epsilon(1). CF(0) has three main subunits: a(1), b(2) and c(9-12). The alpha and beta chains form an alternating ring which encloses part of the gamma chain. CF(1) is attached to CF(0) by a central stalk formed by the gamma and epsilon chains, while a peripheral stalk is formed by the delta and b chains.

The protein localises to the cell inner membrane. The enzyme catalyses ATP + H2O + 4 H(+)(in) = ADP + phosphate + 5 H(+)(out). Its function is as follows. Produces ATP from ADP in the presence of a proton gradient across the membrane. The alpha chain is a regulatory subunit. This is ATP synthase subunit alpha from Nitrosomonas europaea (strain ATCC 19718 / CIP 103999 / KCTC 2705 / NBRC 14298).